The sequence spans 745 residues: MSLITRLLTGNITLRRRAMESLGKAGYSSHAKFSEHKPIERIRNIGISAHIDSGKTTLTERILFYTGRIAEMHEVRGKDNVGATMDSMELERQRGITIQSAATYTLWKDTNINIIDTPGHVDFTVEVERALRVLDGAVLVLCAVGGVQSQTLTVNRQMKRYNVPCLAFINKLDRLGSNPYRVLSQMRSKMNHNAAFIQLPIGVESNCKGIVDLVREKAIYFEGEHGMDIRLDEIPQDMRVESLERRQELIEHLSNADETLGELFLEEKPFTEDDIKAALRRTCINRTFTPVLVGTALKNKGVQPLLDAVLDYLPNPGEVENLGFIEKEGQDPEKVVLNPARDGKDPFVGLAFKLEAGRFGQLTYLRCYQGVLRKGDNIFNARTNKKVRIARLVRLHSNQMEDVNEVYAGDIFALFGVDCASGDTFTTNPKNNLSMESIFVPEPVVSMAIKPNNTKDRDNFSKAIARFTKEDPTFHFFFDNDVKETLVSGMGELHLEIYAQRMEREYGCPVTLGKPKVAFRETLVGPCEFDYLHKKQSGGSGQYARIIGVMEPLPPTQNTLLEFVDETVGTNVPKQFVPGVEKGYREMAEKGMLSGHKLSGIRFRLQDGGHHIVDSSELAFMLASHGAIKEVFQNGSWQILEPIMLVEVTAPEEFQGAVMGHLSKRHGIITGTEGTEGWFTVYAEVPLNDMFGYAGELRSSTQGKGEFTMEYSRYSPCLPDVQDQIVRQYQESQGLAQPDKKKKKN.

The region spanning 40-317 (ERIRNIGISA…AVLDYLPNPG (278 aa)) is the tr-type G domain. Residues 49–56 (AHIDSGKT), 116–120 (DTPGH), and 170–173 (NKLD) contribute to the GTP site.

This sequence belongs to the TRAFAC class translation factor GTPase superfamily. Classic translation factor GTPase family. EF-G/EF-2 subfamily.

Its subcellular location is the mitochondrion. It participates in protein biosynthesis; polypeptide chain elongation. In terms of biological role, mitochondrial GTPase that catalyzes the GTP-dependent ribosomal translocation step during translation elongation. During this step, the ribosome changes from the pre-translocational (PRE) to the post-translocational (POST) state as the newly formed A-site-bound peptidyl-tRNA and P-site-bound deacylated tRNA move to the P and E sites, respectively. Catalyzes the coordinated movement of the two tRNA molecules, the mRNA and conformational changes in the ribosome. Essential during development as it acts as a retrograde signal from mitochondria to the nucleus to slow down cell proliferation if mitochondrial energy output is low. This Drosophila yakuba (Fruit fly) protein is Elongation factor G, mitochondrial.